The sequence spans 58 residues: Arabinogalactan protein 21 (58 aa).

The N-terminal stretch at 1-24 (MEAMKMKMMVFIMVVAVAFSAATA) is a signal peptide. Residues P30, P32, and P34 each carry the 4-hydroxyproline modification. P30, P32, and P34 each carry an O-linked (Ara...) hydroxyproline glycan. S36 is lipidated: GPI-anchor amidated serine. The propeptide at 37–58 (DAAMFVPALFASVVALASGFIF) is removed in mature form.

This sequence belongs to the AG-peptide AGP family. Post-translationally, contains 4-hydroxyproline; hydroxylated on Pro-30, Pro-32 and Pro-34. In terms of processing, O-glycosylated on hydroxyprolines; noncontiguous hydroxylproline residues are glycosylated with arabinogalactan.

It localises to the cell membrane. In terms of biological role, proteoglycan that seems to be implicated in diverse developmental roles such as differentiation, cell-cell recognition, embryogenesis and programmed cell death. In Arabidopsis thaliana (Mouse-ear cress), this protein is Arabinogalactan protein 21.